The primary structure comprises 397 residues: Acetate kinase 1 (397 aa).

Position 8 (asparagine 8) interacts with Mg(2+). Residue lysine 15 coordinates ATP. A substrate-binding site is contributed by arginine 89. Residue aspartate 146 is the Proton donor/acceptor of the active site. ATP-binding positions include 206-210 (HLGNG), 281-283 (DFR), and 329-333 (GVGEN). Glutamate 380 lines the Mg(2+) pocket.

It belongs to the acetokinase family. As to quaternary structure, homodimer. It depends on Mg(2+) as a cofactor. Mn(2+) serves as cofactor.

It localises to the cytoplasm. It catalyses the reaction acetate + ATP = acetyl phosphate + ADP. Its pathway is metabolic intermediate biosynthesis; acetyl-CoA biosynthesis; acetyl-CoA from acetate: step 1/2. Catalyzes the formation of acetyl phosphate from acetate and ATP. Can also catalyze the reverse reaction. This is Acetate kinase 1 from Listeria monocytogenes serotype 4b (strain F2365).